Here is a 740-residue protein sequence, read N- to C-terminus: Inhibitor of nuclear factor kappa-B kinase subunit alpha (740 aa).

The Protein kinase domain maps to 15–302; the sequence is WEMRERLGTG…LTLKQPRCFV (288 aa). Residues 21-29 and Lys44 contribute to the ATP site; that span reads LGTGGFGNV. At Thr23 the chain carries Phosphothreonine; by PKB/AKT1. Asp144 serves as the catalytic Proton acceptor. At Ser176 the chain carries Phosphoserine; by MAP3K14. Phosphoserine is present on Ser180. The interval 455–476 is leucine-zipper; that stretch reads LLRYNTNLTKMKNTLISASQQL. The interval 733-738 is NEMO-binding; sequence LDWSWL.

This sequence belongs to the protein kinase superfamily. Ser/Thr protein kinase family. I-kappa-B kinase subfamily. In terms of assembly, component of the I-kappa-B-kinase (IKK) core complex consisting of CHUK, IKBKB and IKBKG; probably four alpha/CHUK-beta/IKBKB dimers are associated with four gamma/IKBKG subunits. The IKK core complex seems to associate with regulatory or adapter proteins to form a IKK-signalosome holo-complex. The IKK complex associates with TERF2IP/RAP1, leading to promote IKK-mediated phosphorylation of RELA/p65. Part of a complex composed of NCOA2, NCOA3, CHUK/IKKA, IKBKB, IKBKG and CREBBP. Part of a 70-90 kDa complex at least consisting of CHUK/IKKA, IKBKB, NFKBIA, RELA, ELP1 and MAP3K14. Directly interacts with TRPC4AP. May interact with TRAF2. Interacts with NALP2. May interact with MAVS/IPS1. Interacts with ARRB1 and ARRB2. Interacts with NLRC5; prevents CHUK phosphorylation and kinase activity. Interacts with PIAS1; this interaction induces PIAS1 phosphorylation. Interacts with ZNF268 isoform 2; the interaction is further increased in a TNF-alpha-dependent manner. Interacts with IFIT5; the interaction synergizes the recruitment of IKK to MAP3K7 and enhances IKK phosphorylation. Interacts with LRRC14. Directly interacts with DDX3X after the physiological activation of the TLR7 and TLR8 pathways; this interaction enhances CHUK autophosphorylation. In terms of processing, ubiquitinated by TRIM56 via 'Lys-63'-linked ubiquitination, promoting activation of CHUK/IKKA. Phosphorylated by MAP3K14/NIK, AKT and to a lesser extent by MEKK1, and dephosphorylated by PP2A. Autophosphorylated.

The protein resides in the cytoplasm. Its subcellular location is the nucleus. It catalyses the reaction L-seryl-[I-kappa-B protein] + ATP = O-phospho-L-seryl-[I-kappa-B protein] + ADP + H(+). Its activity is regulated as follows. Activated when phosphorylated and inactivated when dephosphorylated. Its function is as follows. Serine kinase that plays an essential role in the NF-kappa-B signaling pathway which is activated by multiple stimuli such as inflammatory cytokines, bacterial or viral products, DNA damages or other cellular stresses. Acts as a part of the canonical IKK complex in the conventional pathway of NF-kappa-B activation and phosphorylates inhibitors of NF-kappa-B on serine residues. These modifications allow polyubiquitination of the inhibitors and subsequent degradation by the proteasome. In turn, free NF-kappa-B is translocated into the nucleus and activates the transcription of hundreds of genes involved in immune response, growth control, or protection against apoptosis. Negatively regulates the pathway by phosphorylating the scaffold protein TAXBP1 and thus promoting the assembly of the A20/TNFAIP3 ubiquitin-editing complex (composed of A20/TNFAIP3, TAX1BP1, and the E3 ligases ITCH and RNF11). Therefore, CHUK plays a key role in the negative feedback of NF-kappa-B canonical signaling to limit inflammatory gene activation. As part of the non-canonical pathway of NF-kappa-B activation, the MAP3K14-activated CHUK/IKKA homodimer phosphorylates NFKB2/p100 associated with RelB, inducing its proteolytic processing to NFKB2/p52 and the formation of NF-kappa-B RelB-p52 complexes. In turn, these complexes regulate genes encoding molecules involved in B-cell survival and lymphoid organogenesis. Also participates in the negative feedback of the non-canonical NF-kappa-B signaling pathway by phosphorylating and destabilizing MAP3K14/NIK. Within the nucleus, phosphorylates CREBBP and consequently increases both its transcriptional and histone acetyltransferase activities. Modulates chromatin accessibility at NF-kappa-B-responsive promoters by phosphorylating histones H3 at 'Ser-10' that are subsequently acetylated at 'Lys-14' by CREBBP. Additionally, phosphorylates the CREBBP-interacting protein NCOA3. Also phosphorylates FOXO3 and may regulate this pro-apoptotic transcription factor. Interacts with SASH1. Phosphorylates RIPK1 at 'Ser-25' which represses its kinase activity and consequently prevents TNF-mediated RIPK1-dependent cell death. Phosphorylates AMBRA1 following mitophagy induction, promoting AMBRA1 interaction with ATG8 family proteins and its mitophagic activity. The polypeptide is Inhibitor of nuclear factor kappa-B kinase subunit alpha (CHUK) (Bos taurus (Bovine)).